The chain runs to 300 residues: Protoheme IX farnesyltransferase (300 aa).

9 helical membrane-spanning segments follow: residues 26–46 (VVQLIVFCALIGMVLAVPGLP), 54–74 (IAWACAGVWLVAGAAAAFNCI), 102–122 (LLFSALLCVAGSALLYFLVNP), 123–143 (LTMWLTFATFVGYAVIYTLIL), 150–170 (NIVIGGASGAMPPVLGWAAMT), 177–197 (ALILFLIIFLWTPPHFWALAL), 224–244 (VLLYTLILFAACLMPFIYGMS), 246–266 (WPYLAAAVLLGAGFCGYGFAL), and 279–299 (FRFSLIHLSALFAALLLDHYL).

It belongs to the UbiA prenyltransferase family. Protoheme IX farnesyltransferase subfamily.

It localises to the cell inner membrane. It carries out the reaction heme b + (2E,6E)-farnesyl diphosphate + H2O = Fe(II)-heme o + diphosphate. It functions in the pathway porphyrin-containing compound metabolism; heme O biosynthesis; heme O from protoheme: step 1/1. Its function is as follows. Converts heme B (protoheme IX) to heme O by substitution of the vinyl group on carbon 2 of heme B porphyrin ring with a hydroxyethyl farnesyl side group. The sequence is that of Protoheme IX farnesyltransferase from Verminephrobacter eiseniae (strain EF01-2).